Reading from the N-terminus, the 198-residue chain is Putative pseudouridine methyltransferase (198 aa).

Residues leucine 132 and cysteine 186 each coordinate S-adenosyl-L-methionine.

The protein belongs to the methyltransferase superfamily. TrmY family.

It localises to the cytoplasm. The polypeptide is Putative pseudouridine methyltransferase (Shewanella frigidimarina (strain NCIMB 400)).